We begin with the raw amino-acid sequence, 344 residues long: GTP 3',8-cyclase (344 aa).

Residues Pro19–Pro244 enclose the Radical SAM core domain. Arg28 is a GTP binding site. Positions 35 and 39 each coordinate [4Fe-4S] cluster. An S-adenosyl-L-methionine-binding site is contributed by Tyr41. Residue Cys42 participates in [4Fe-4S] cluster binding. GTP is bound at residue Arg77. Residue Gly81 participates in S-adenosyl-L-methionine binding. GTP is bound at residue Thr111. Residue Ser135 coordinates S-adenosyl-L-methionine. Residue Lys171 coordinates GTP. Met205 contributes to the S-adenosyl-L-methionine binding site. [4Fe-4S] cluster is bound by residues Cys268 and Cys271. Position 273–275 (Arg273–Arg275) interacts with GTP. Cys285 contributes to the [4Fe-4S] cluster binding site.

Belongs to the radical SAM superfamily. MoaA family. As to quaternary structure, monomer and homodimer. The cofactor is [4Fe-4S] cluster.

It carries out the reaction GTP + AH2 + S-adenosyl-L-methionine = (8S)-3',8-cyclo-7,8-dihydroguanosine 5'-triphosphate + 5'-deoxyadenosine + L-methionine + A + H(+). Its pathway is cofactor biosynthesis; molybdopterin biosynthesis. Functionally, catalyzes the cyclization of GTP to (8S)-3',8-cyclo-7,8-dihydroguanosine 5'-triphosphate. The polypeptide is GTP 3',8-cyclase (Bradyrhizobium diazoefficiens (strain JCM 10833 / BCRC 13528 / IAM 13628 / NBRC 14792 / USDA 110)).